The sequence spans 283 residues: Peflin (283 aa).

8 tandem repeats follow at residues 21–30, 36–44, 45–54, 55–62, 71–79, 80–87, 88–95, and 96–104. The tract at residues 21-104 is 8 X 9 AA approximate tandem repeat of [AP]-P-G-G-P-Y-G-G-P-P; sequence PQTNYYGGQQ…SQQHGSYGQG (84 aa). Residues 37-70 are compositionally biased toward low complexity; sequence PAASYGRPAPGAPYGSPPSGGVYGHPVPGSAAPG. The disordered stretch occupies residues 37–113; sequence PAASYGRPAP…GAPAGNIPPG (77 aa). Residues 71 to 81 are compositionally biased toward gly residues; the sequence is APGGPYGGQAP. Low complexity predominate over residues 93–104; it reads YGSQQHGSYGQG. EF-hand domains follow at residues 113 to 148, 154 to 179, 180 to 215, 216 to 252, and 253 to 282; these read GVDP…TNWS, TCTM…SALW, RFIQ…MGYQ, LSPQ…LQSM, and TEAF…TTRL. Ca(2+) contacts are provided by aspartate 126, aspartate 128, serine 130, tyrosine 132, and glutamate 137. The Ca(2+) site is built by aspartate 193, aspartate 195, serine 197, serine 199, and glutamate 204.

In terms of assembly, heterodimer; heterodimerizes (via the EF-hand 5) with pdcd6.

Its subcellular location is the cytoplasm. The protein localises to the endoplasmic reticulum. It localises to the membrane. The protein resides in the cytoplasmic vesicle. It is found in the COPII-coated vesicle membrane. Calcium-binding protein that acts as an adapter that bridges unrelated proteins or stabilizes weak protein-protein complexes in response to calcium. Acts as a negative regulator of ER-Golgi transport. The polypeptide is Peflin (Xenopus laevis (African clawed frog)).